A 171-amino-acid polypeptide reads, in one-letter code: ATP synthase subunit b (171 aa).

The chain crosses the membrane as a helical span at residues 19-39 (VGVGLILFIAIVIWAKAPAMI).

The protein belongs to the ATPase B chain family. F-type ATPases have 2 components, F(1) - the catalytic core - and F(0) - the membrane proton channel. F(1) has five subunits: alpha(3), beta(3), gamma(1), delta(1), epsilon(1). F(0) has three main subunits: a(1), b(2) and c(10-14). The alpha and beta chains form an alternating ring which encloses part of the gamma chain. F(1) is attached to F(0) by a central stalk formed by the gamma and epsilon chains, while a peripheral stalk is formed by the delta and b chains.

The protein localises to the cell inner membrane. Functionally, f(1)F(0) ATP synthase produces ATP from ADP in the presence of a proton or sodium gradient. F-type ATPases consist of two structural domains, F(1) containing the extramembraneous catalytic core and F(0) containing the membrane proton channel, linked together by a central stalk and a peripheral stalk. During catalysis, ATP synthesis in the catalytic domain of F(1) is coupled via a rotary mechanism of the central stalk subunits to proton translocation. In terms of biological role, component of the F(0) channel, it forms part of the peripheral stalk, linking F(1) to F(0). This Caulobacter sp. (strain K31) protein is ATP synthase subunit b.